Consider the following 188-residue polypeptide: Elongation factor P (188 aa).

The protein belongs to the elongation factor P family.

The protein resides in the cytoplasm. The protein operates within protein biosynthesis; polypeptide chain elongation. In terms of biological role, involved in peptide bond synthesis. Stimulates efficient translation and peptide-bond synthesis on native or reconstituted 70S ribosomes in vitro. Probably functions indirectly by altering the affinity of the ribosome for aminoacyl-tRNA, thus increasing their reactivity as acceptors for peptidyl transferase. This chain is Elongation factor P, found in Cellvibrio japonicus (strain Ueda107) (Pseudomonas fluorescens subsp. cellulosa).